Consider the following 286-residue polypeptide: Homoserine kinase (286 aa).

Position 78 to 88 (78 to 88) interacts with ATP; that stretch reads PLARGLGSSSS.

The protein belongs to the GHMP kinase family. Homoserine kinase subfamily.

It localises to the cytoplasm. The enzyme catalyses L-homoserine + ATP = O-phospho-L-homoserine + ADP + H(+). The protein operates within amino-acid biosynthesis; L-threonine biosynthesis; L-threonine from L-aspartate: step 4/5. Functionally, catalyzes the ATP-dependent phosphorylation of L-homoserine to L-homoserine phosphate. This chain is Homoserine kinase, found in Streptococcus suis (strain 98HAH33).